Here is a 388-residue protein sequence, read N- to C-terminus: Alanine racemase (388 aa).

Lys-44 serves as the catalytic Proton acceptor; specific for D-alanine. At Lys-44 the chain carries N6-(pyridoxal phosphate)lysine. Arg-142 provides a ligand contact to substrate. Tyr-273 serves as the catalytic Proton acceptor; specific for L-alanine. Met-321 lines the substrate pocket.

The protein belongs to the alanine racemase family. Pyridoxal 5'-phosphate is required as a cofactor.

The enzyme catalyses L-alanine = D-alanine. The protein operates within amino-acid biosynthesis; D-alanine biosynthesis; D-alanine from L-alanine: step 1/1. In terms of biological role, catalyzes the interconversion of L-alanine and D-alanine. May also act on other amino acids. The protein is Alanine racemase (alr) of Mycobacterium avium (strain 104).